Consider the following 115-residue polypeptide: uncharacterized protein (115 aa).

An N-terminal signal peptide occupies residues 1–29; sequence MKKAMAILAVLAAAAVICGLLFFHNDVTD.

This is an uncharacterized protein from Bacillus subtilis (strain 168).